Reading from the N-terminus, the 208-residue chain is Regulator of Ty1 transposition protein 105 (208 aa).

Residues 28-105 are disordered; sequence GVSFDRSLTP…QRADQRSRLE (78 aa). The segment covering 33-42 has biased composition (polar residues); the sequence is RSLTPQSLRT. Over residues 60–71 the composition is skewed to low complexity; it reads IDTSPSVVSDII. The segment covering 94–105 has biased composition (basic and acidic residues); sequence ERQRADQRSRLE.

Its subcellular location is the cytoplasm. It is found in the nucleus. Its function is as follows. Involved in regulation of Ty1 transposition. Inhibits Ty1 transposition at a post-transcriptional and pre-integrational stage of the Ty1 retrotransposition cycle. The protein is Regulator of Ty1 transposition protein 105 (RTT105) of Saccharomyces cerevisiae (strain YJM789) (Baker's yeast).